The chain runs to 95 residues: Late cornified envelope protein 7A (95 aa).

The protein belongs to the LCE family.

Functionally, precursors of the cornified envelope of the stratum corneum. This Homo sapiens (Human) protein is Late cornified envelope protein 7A.